The chain runs to 975 residues: Aminopeptidase N (975 aa).

Topologically, residues 1-11 (MAKGFYISKAL) are cytoplasmic. The chain crosses the membrane as a helical; Signal-anchor for type II membrane protein span at residues 12–32 (GILAIVLGIAAVSTIIALSVV). The cytosolic Ser/Thr-rich junction stretch occupies residues 33–74 (YAQEKNKNAESSPVSSPVSSPVSSPVSPTNPSTTAATTLAQS). The Extracellular segment spans residues 33–975 (YAQEKNKNAE…VLQWFRENSQ (943 aa)). The segment at 41-68 (AESSPVSSPVSSPVSSPVSPTNPSTTAA) is disordered. The span at 43-59 (SSPVSSPVSSPVSSPVS) shows a compositional bias: low complexity. The segment at 75 to 975 (KPWNHYRLPK…VLQWFRENSQ (901 aa)) is metalloprotease. The N-linked (GlcNAc...) asparagine glycan is linked to Asn134. At Tyr182 the chain carries Sulfotyrosine. Asn240 and Asn271 each carry an N-linked (GlcNAc...) asparagine glycan. A substrate-binding site is contributed by 358 to 362 (GAMEN). His394 is a Zn(2+) binding site. Glu395 (proton acceptor) is an active-site residue. His398 and Glu417 together coordinate Zn(2+). Residues Tyr425 and Tyr430 each carry the sulfotyrosine modification. 5 N-linked (GlcNAc...) asparagine glycosylation sites follow: Asn533, Asn580, Asn633, Asn689, and Asn747. 2 cysteine pairs are disulfide-bonded: Cys769–Cys776 and Cys806–Cys842. Residue Asn826 is glycosylated (N-linked (GlcNAc...) asparagine).

Belongs to the peptidase M1 family. In terms of assembly, (Microbial infection) Interacts with CCoV spike glycoprotein. Homodimer. Interacts with SLC6A19. It depends on Zn(2+) as a cofactor. Sulfated. In terms of processing, N- and O-glycosylated. Post-translationally, may undergo proteolysis and give rise to a soluble form.

The protein localises to the cell membrane. It carries out the reaction Release of an N-terminal amino acid, Xaa-|-Yaa- from a peptide, amide or arylamide. Xaa is preferably Ala, but may be most amino acids including Pro (slow action). When a terminal hydrophobic residue is followed by a prolyl residue, the two may be released as an intact Xaa-Pro dipeptide.. Its function is as follows. Broad specificity aminopeptidase which plays a role in the final digestion of peptides generated from hydrolysis of proteins by gastric and pancreatic proteases. Also involved in the processing of various peptides including peptide hormones, such as angiotensin III and IV, neuropeptides, and chemokines. May also be involved the cleavage of peptides bound to major histocompatibility complex class II molecules of antigen presenting cells. May have a role in angiogenesis and promote cholesterol crystallization. May have a role in amino acid transport by acting as binding partner of amino acid transporter SLC6A19 and regulating its activity. Functionally, (Microbial infection) Probable receptor for canine coronavirus (CCoV). This chain is Aminopeptidase N (ANPEP), found in Canis lupus familiaris (Dog).